The primary structure comprises 67 residues: Phycobilisome 7.8 kDa linker polypeptide, allophycocyanin-associated, core (67 aa).

The CpcD-like domain maps to 1-56 (MRMFKITACVPSQTRIRTQRELQNTYFTKLVPYENWFREQQRIQKMGGKIVKVELF).

It belongs to the phycobilisome linker protein family.

Its subcellular location is the cellular thylakoid membrane. Its function is as follows. Rod linker protein, associated with allophycocyanin. Linker polypeptides determine the state of aggregation and the location of the disk-shaped phycobiliprotein units within the phycobilisome and modulate their spectroscopic properties in order to mediate a directed and optimal energy transfer. In Thermosynechococcus vestitus (strain NIES-2133 / IAM M-273 / BP-1), this protein is Phycobilisome 7.8 kDa linker polypeptide, allophycocyanin-associated, core (apcC).